The primary structure comprises 218 residues: Uracil-DNA glycosylase (218 aa).

Catalysis depends on D68, which acts as the Proton acceptor.

This sequence belongs to the uracil-DNA glycosylase (UDG) superfamily. UNG family. Homodimer. Interacts with protein OPG148. Component of the Uracil-DNA glycosylase(UDG)-OPG148-polymerase complex; OPG148 and UDG form a heterodimeric processivity factor that associates with OPG71 to form the processive polymerase holoenzyme.

It catalyses the reaction Hydrolyzes single-stranded DNA or mismatched double-stranded DNA and polynucleotides, releasing free uracil.. Functionally, plays an essential role in viral replication as a component of the DNA polymerase processivity factor. Excises uracil residues from the DNA which can arise as a result of misincorporation of dUMP residues by DNA polymerase or due to deamination of cytosine. This is Uracil-DNA glycosylase (OPG116) from Bos taurus (Bovine).